A 457-amino-acid chain; its full sequence is Phosphoglucosamine mutase (457 aa).

S109 acts as the Phosphoserine intermediate in catalysis. 4 residues coordinate Mg(2+): S109, D251, D253, and D255. Position 109 is a phosphoserine (S109).

This sequence belongs to the phosphohexose mutase family. It depends on Mg(2+) as a cofactor. Activated by phosphorylation.

The catalysed reaction is alpha-D-glucosamine 1-phosphate = D-glucosamine 6-phosphate. Catalyzes the conversion of glucosamine-6-phosphate to glucosamine-1-phosphate. This is Phosphoglucosamine mutase from Bdellovibrio bacteriovorus (strain ATCC 15356 / DSM 50701 / NCIMB 9529 / HD100).